The following is a 401-amino-acid chain: Nodal homolog 3-B (401 aa).

The N-terminal stretch at 1–18 is a signal peptide; that stretch reads MAFLSLFLCLVFSSPLMA. Positions 19–274 are excised as a propeptide; that stretch reads MPPALQGRKA…KVNGFRRLRR (256 aa). Residues N168, N337, and N344 are each glycosylated (N-linked (GlcNAc...) asparagine). Intrachain disulfides connect C299–C365 and C328–C396.

Belongs to the TGF-beta family. Monomer. The propeptide region interacts with bmp4 in a non-covalent manner. As to expression, expressed in the dorsal marginal region of late blastula, becoming restricted to the Spemann organizer at the early gastrula stage.

Its subcellular location is the secreted. In terms of biological role, exhibits mesoderm-dorsalizing activity and neural-inducing activity, but lacks mesoderm-inducing activity. Regulates the expression of specific mesodermal and neural genes. Induces convergent extension movements at the embryonic midline by activating the fgf signaling pathway to induce t/bra expression in the organizer region. Acts with wnt11 to induce Spemann organizer cells and induce axis formation. The unprocessed protein antagonizes bmp-signaling. The protein is Nodal homolog 3-B of Xenopus tropicalis (Western clawed frog).